The chain runs to 271 residues: Na(+), Li(+), K(+)/H(+) antiporter subunit B (271 aa).

Helical transmembrane passes span isoleucine 2–phenylalanine 22, leucine 36–glycine 56, tryptophan 94–isoleucine 114, proline 130–tryptophan 150, isoleucine 152–glutamine 172, serine 193–glycine 213, and alanine 216–methionine 236. Positions threonine 252–leucine 271 are disordered.

The protein belongs to the UmpA/UmpB family. As to quaternary structure, heterodimer composed of UmpA and UmpB.

It is found in the cell membrane. Its function is as follows. Part of a two-component antiporter that catalyzes the efflux of Na(+), Li(+) and K(+) in exchange for external protons. Shows a preference for Na(+), followed by K(+) and Li(+). In Vreelandella zhaodongensis (Halomonas zhaodongensis), this protein is Na(+), Li(+), K(+)/H(+) antiporter subunit B.